The primary structure comprises 414 residues: 2,3-diketo-5-methylthiopentyl-1-phosphate enolase (414 aa).

Catalysis depends on Lys-99, which acts as the Proton acceptor. Residues Lys-148, 174–177 (KDDE), His-265, Gly-338, and 360–361 (GG) each bind substrate. The Mg(2+) site is built by Lys-174, Asp-176, and Glu-177. Lys-174 carries the N6-carboxylysine modification.

It belongs to the RuBisCO large chain family. Type IV subfamily. As to quaternary structure, homodimer. The cofactor is Mg(2+).

The enzyme catalyses 5-methylsulfanyl-2,3-dioxopentyl phosphate = 2-hydroxy-5-methylsulfanyl-3-oxopent-1-enyl phosphate. It participates in amino-acid biosynthesis; L-methionine biosynthesis via salvage pathway; L-methionine from S-methyl-5-thio-alpha-D-ribose 1-phosphate: step 3/6. In terms of biological role, catalyzes the enolization of 2,3-diketo-5-methylthiopentyl-1-phosphate (DK-MTP-1-P) into 2-hydroxy-3-keto-5-methylthiopentenyl-1-phosphate (HK-MTPenyl-1-P). The sequence is that of 2,3-diketo-5-methylthiopentyl-1-phosphate enolase from Bacillus cereus (strain ATCC 14579 / DSM 31 / CCUG 7414 / JCM 2152 / NBRC 15305 / NCIMB 9373 / NCTC 2599 / NRRL B-3711).